Reading from the N-terminus, the 185-residue chain is Ribosome-recycling factor (185 aa).

It belongs to the RRF family.

It localises to the cytoplasm. Responsible for the release of ribosomes from messenger RNA at the termination of protein biosynthesis. May increase the efficiency of translation by recycling ribosomes from one round of translation to another. This chain is Ribosome-recycling factor, found in Bacillus cereus (strain G9842).